Consider the following 578-residue polypeptide: Endonuclease GajA (578 aa).

Residues 1–341 (MKFSNITIKN…RLIRVHSTEK (341 aa)) form an ATPase domain region. 32 to 36 (DIGKT) lines the ATP pocket. The toprim domain stretch occupies residues 370–510 (LFAERVLLIE…LGERIYLSEI (141 aa)). Residues E379, E383, D463, E464, and E513 each contribute to the a divalent metal cation site.

In terms of assembly, homotetramer. Forms the core of the anti-phage defense complex. Interacts with GajB; 2 GajB dimers dock at opposite sides of the GajA complex to form a 4:4 GajA-GajB assembly (GajAB). GajAB interacts with Bacillus phage Phi3T Gad1 protein; this interaction forms a 4:4:8 GajAB-Gad1 complex and leads to GajAB inhibition. Mg(2+) serves as cofactor. Mn(2+) is required as a cofactor.

Endonuclease activity inhibited by all NTPs, dNTPs, NDPs (at 0.5 mM, UDP not tested) and AMP-PNP; not inhibited by any tested NMP, dNMP or nucleoside. Inhibited by 100 mM NaCl, 100 mM KCl, 0.5 mM Co(2+) and 0.5 mM Ni(2+). Its function is as follows. Component of antiviral defense system Gabija type I, composed of GajA and GajB. Endonuclease that nicks double-stranded DNA within the sequence 5'-TNNNCGGGNNA-3' in the absence of nucleotides (NTP, dNTP and NDPs), cleaving after C-1. Has no detected ATPase activity. Expression of Gabija type I in B.subtilis (strain BEST7003) confers resistance to phages phi105, phi29, rho14, SpBeta and SBSphiC. Expression of Gabija type I in E.coli B (strain ATCC 11303) confers resistance to phage T7. It is thought that this enzyme is strongly suppressed during physiological growth (in E.coli total nucleotide concentration is over 8.7 mM in mid-log phase), but during viral replication, when nucleotides are rapidly consumed, it is de-suppressed and degrades target DNA. The chain is Endonuclease GajA from Bacillus cereus (strain VD045).